We begin with the raw amino-acid sequence, 709 residues long: Polyribonucleotide nucleotidyltransferase (709 aa).

Positions 487 and 493 each coordinate Mg(2+). In terms of domain architecture, KH spans 554-613; sequence PRIHTMKISSDKIKDVIGKGGAVIRALCEETGTTIEIEDDGTIKIAATEGAAAKEAIRRI. Residues 623–691 enclose the S1 motif domain; the sequence is GKIYPGKVMR…RQGRIRLSIK (69 aa).

It belongs to the polyribonucleotide nucleotidyltransferase family. As to quaternary structure, component of the RNA degradosome, which is a multiprotein complex involved in RNA processing and mRNA degradation. The cofactor is Mg(2+).

The protein resides in the cytoplasm. It carries out the reaction RNA(n+1) + phosphate = RNA(n) + a ribonucleoside 5'-diphosphate. In terms of biological role, involved in mRNA degradation. Catalyzes the phosphorolysis of single-stranded polyribonucleotides processively in the 3'- to 5'-direction. In Aliivibrio salmonicida (strain LFI1238) (Vibrio salmonicida (strain LFI1238)), this protein is Polyribonucleotide nucleotidyltransferase.